Reading from the N-terminus, the 460-residue chain is Jacalin-related lectin 36 (460 aa).

The Jacalin-type lectin 1 domain maps to 1–131 (MAAATMSWDD…LNSIDVHFAP (131 aa)). Ala2 is modified (N-acetylalanine). Disordered stretches follow at residues 34–57 (YDGD…VSLS), 133–162 (PSSS…WDDG), and 291–334 (SGRG…PHEG). Residues 133–143 (PSSSSSSSSLS) are compositionally biased toward low complexity. Residues 145-289 (ANKVDAQGGK…LNALGAYFAP (145 aa)) enclose the Jacalin-type lectin 2 domain. The span at 292 to 309 (GRGTPSATQPPGSAQPTG) shows a compositional bias: polar residues. In terms of domain architecture, Jacalin-type lectin 3 spans 313-457 (AKKLEAKGGN…IHQVGVHVKP (145 aa)).

It belongs to the jacalin lectin family.

This chain is Jacalin-related lectin 36 (JAL36), found in Arabidopsis thaliana (Mouse-ear cress).